A 98-amino-acid polypeptide reads, in one-letter code: Pancreatic polypeptide prohormone (98 aa).

The first 29 residues, 1–29, serve as a signal peptide directing secretion; the sequence is MAVAYYCLSLFLLSTWVALLLQPLQGAWG. Y65 is modified (tyrosine amide).

The protein belongs to the NPY family. Post-translationally, no icosapeptide-like peptide is cleaved from the C-terminal.

The protein resides in the secreted. Hormone secreted by pancreatic cells that acts as a regulator of pancreatic and gastrointestinal functions probably by signaling through the G protein-coupled receptor NPY4R2. This Rattus norvegicus (Rat) protein is Pancreatic polypeptide prohormone (Ppy).